The primary structure comprises 330 residues: MKQTIFSGIQPSGSVTLGNYIGAMKQFVELQHDYNSYFCIVDQHAITVPQDRLELRKNIRNLAALYLAVGLDPEKATLFIQSEVPAHAQAGWMMQCVAYIGELERMTQFKDKSKGNEAVVSGLLTYPPLMAADILLYGTDLVPVGEDQKQHLELTRNLAERFNKKYNDIFTIPEVKIPKVGARIMSLNDPLKKMSKSDPNQKAYITLLDEPKQLEKKIKSAVTDSEGIVKFDKENKPGVSNLLTIYSILGNTTIEELEAKYEGKGYGEFKGDLAEVVVNALKPIQDRYYELIESEELDRILDEGAERANRTANKMLKKMENAMGLGRKRR.

ATP contacts are provided by residues 10-12 (QPS) and 18-19 (GN). Positions 11–19 (PSGSVTLGN) match the 'HIGH' region motif. Asp-133 lines the L-tryptophan pocket. Residues 145–147 (GED), Ile-184, and 193–197 (KMSKS) contribute to the ATP site. The 'KMSKS' region signature appears at 193 to 197 (KMSKS).

Belongs to the class-I aminoacyl-tRNA synthetase family. In terms of assembly, homodimer.

It localises to the cytoplasm. The enzyme catalyses tRNA(Trp) + L-tryptophan + ATP = L-tryptophyl-tRNA(Trp) + AMP + diphosphate + H(+). In terms of biological role, catalyzes the attachment of tryptophan to tRNA(Trp). The sequence is that of Tryptophan--tRNA ligase from Bacillus subtilis (strain 168).